The primary structure comprises 2004 residues: Immunoglobulin A1 protease (2004 aa).

The first 42 residues, 1-42, serve as a signal peptide directing secretion; the sequence is MEKYFGEKQERFSFRKLSVGLVSATISSLFFMSVLASSSVDA. The propeptide occupies 43–99; sequence QETAGVHYKYVADSELSSEEKKQLVYDIPTYVENDDETYYLVYKLNSQNQLAELPNT. The LPXTG sorting signal motif lies at 96–100; that stretch reads LPNTG. Thr-99 carries the post-translational modification Pentaglycyl murein peptidoglycan amidated threonine. 2 helical membrane-spanning segments follow: residues 106 to 125 and 132 to 154; these read QALV…FAVS and KTVL…VHAL. The Extracellular portion of the chain corresponds to 155-2004; that stretch reads ENHLLLNYNT…FRSSIFENKK (1850 aa). 4 disordered regions span residues 194-213, 235-305, 373-394, and 422-720; these read TTSE…PTKQ, QEQT…NPQD, EIVS…TKKT, and PELP…PEKT. Polar residues-rich tracts occupy residues 197-213 and 235-246; these read ESEV…PTKQ and QEQTPVSSTKPT. The span at 276–296 shows a compositional bias: basic and acidic residues; that stretch reads LAEHKNLETKKEEKISPKEKT. The region spanning 314–393 is the G5 domain; sequence KPELLYREET…PRIVEKGTKK (80 aa). 3 tandem repeats follow at residues 419–435, 436–452, and 453–469. Residues 419 to 469 form a 3 X 17 AA approximate tandem repeats region; the sequence is AIQPELPEAVVSDKGEPEVQPTLPEAVVTDKGETEVQPESPDTVVSDKGEP. Residues 485-511 show a composition bias toward basic and acidic residues; that stretch reads VKPETPVEKTKEQGPEKTEEVPVKPTE. Polar residues-rich tracts occupy residues 516 to 529 and 538 to 572; these read NPNE…SIQE and EEST…SVGE. The span at 574–591 shows a compositional bias: basic and acidic residues; that stretch reads NKPEHNDSKNENSEKTVE. Composition is skewed to polar residues over residues 618 to 639 and 648 to 681; these read EETQ…SNKP and ESNQ…PSNG. Over residues 682–699 the composition is skewed to low complexity; that stretch reads NSTEDVSTESNTSNSNGN. A compositionally biased stretch (basic and acidic residues) spans 700 to 720; that stretch reads EEIKQENELDPDKKVEEPEKT. His-1645 serves as a coordination point for Zn(2+). Glu-1646 is a catalytic residue. Residues His-1649 and Glu-1669 each coordinate Zn(2+).

This sequence belongs to the peptidase M26 family. Zn(2+) is required as a cofactor. Post-translationally, the Gram-positive cell-wall anchor motif LPXTG is located in the N-terminal part, in contrast to such motifs in other known streptococcal and staphylococcal proteins. The protease could be cleaved by the sortase and anchored in the membrane via the two potential N-terminal transmembrane domains, whereas the propeptide located prior to the LPXTG motif would remain attached to the cell wall peptidoglycan by an amide bond.

It is found in the secreted. Its subcellular location is the cell wall. The protein localises to the membrane. The catalysed reaction is Cleavage of Pro-|-Thr bond in the hinge region of the heavy chain of human IgA.. In terms of biological role, zinc metalloproteinase which cleaves human immunoglobulin A1 (IgA1) in the hinge region, rendering it less efficient in coating the surface of colonizing or invading pneumococci. Strongly contributes to virulence in mice. May be responsible for pneumococcal infection and is potentially involved in distinct stages of pneumococcal disease. The protein is Immunoglobulin A1 protease (iga) of Streptococcus pneumoniae serotype 4 (strain ATCC BAA-334 / TIGR4).